Reading from the N-terminus, the 101-residue chain is NAD(P)H-quinone oxidoreductase subunit 4L, chloroplastic (101 aa).

A run of 3 helical transmembrane segments spans residues 2–22 (MFEHVLFLSVYLFSIGIYGLI), 32–52 (ICLELILNSINLNLVTFSDLF), and 61–81 (IFAIFVIALAAAEAAIGLSIL).

The protein belongs to the complex I subunit 4L family. NDH is composed of at least 16 different subunits, 5 of which are encoded in the nucleus.

The protein localises to the plastid. It is found in the chloroplast thylakoid membrane. It carries out the reaction a plastoquinone + NADH + (n+1) H(+)(in) = a plastoquinol + NAD(+) + n H(+)(out). The enzyme catalyses a plastoquinone + NADPH + (n+1) H(+)(in) = a plastoquinol + NADP(+) + n H(+)(out). Functionally, NDH shuttles electrons from NAD(P)H:plastoquinone, via FMN and iron-sulfur (Fe-S) centers, to quinones in the photosynthetic chain and possibly in a chloroplast respiratory chain. The immediate electron acceptor for the enzyme in this species is believed to be plastoquinone. Couples the redox reaction to proton translocation, and thus conserves the redox energy in a proton gradient. This chain is NAD(P)H-quinone oxidoreductase subunit 4L, chloroplastic, found in Oryza nivara (Indian wild rice).